The sequence spans 320 residues: Lipoyl synthase (320 aa).

7 residues coordinate [4Fe-4S] cluster: cysteine 67, cysteine 72, cysteine 78, cysteine 93, cysteine 97, cysteine 100, and serine 307. Residues 79-296 enclose the Radical SAM core domain; it reads FNHGTATFMI…REKAAEMGFE (218 aa).

This sequence belongs to the radical SAM superfamily. Lipoyl synthase family. Requires [4Fe-4S] cluster as cofactor.

Its subcellular location is the cytoplasm. It carries out the reaction [[Fe-S] cluster scaffold protein carrying a second [4Fe-4S](2+) cluster] + N(6)-octanoyl-L-lysyl-[protein] + 2 oxidized [2Fe-2S]-[ferredoxin] + 2 S-adenosyl-L-methionine + 4 H(+) = [[Fe-S] cluster scaffold protein] + N(6)-[(R)-dihydrolipoyl]-L-lysyl-[protein] + 4 Fe(3+) + 2 hydrogen sulfide + 2 5'-deoxyadenosine + 2 L-methionine + 2 reduced [2Fe-2S]-[ferredoxin]. It participates in protein modification; protein lipoylation via endogenous pathway; protein N(6)-(lipoyl)lysine from octanoyl-[acyl-carrier-protein]: step 2/2. Its function is as follows. Catalyzes the radical-mediated insertion of two sulfur atoms into the C-6 and C-8 positions of the octanoyl moiety bound to the lipoyl domains of lipoate-dependent enzymes, thereby converting the octanoylated domains into lipoylated derivatives. This chain is Lipoyl synthase, found in Actinobacillus succinogenes (strain ATCC 55618 / DSM 22257 / CCUG 43843 / 130Z).